The following is a 74-amino-acid chain: Small ribosomal subunit protein bS18 (74 aa).

The protein belongs to the bacterial ribosomal protein bS18 family. As to quaternary structure, part of the 30S ribosomal subunit. Forms a tight heterodimer with protein bS6.

Its function is as follows. Binds as a heterodimer with protein bS6 to the central domain of the 16S rRNA, where it helps stabilize the platform of the 30S subunit. This chain is Small ribosomal subunit protein bS18, found in Zymomonas mobilis subsp. mobilis (strain ATCC 31821 / ZM4 / CP4).